The chain runs to 74 residues: Large ribosomal subunit protein bL31 (74 aa).

C16, C18, C38, and C41 together coordinate Zn(2+).

Belongs to the bacterial ribosomal protein bL31 family. Type A subfamily. Part of the 50S ribosomal subunit. It depends on Zn(2+) as a cofactor.

Its function is as follows. Binds the 23S rRNA. In Acinetobacter baylyi (strain ATCC 33305 / BD413 / ADP1), this protein is Large ribosomal subunit protein bL31.